We begin with the raw amino-acid sequence, 338 residues long: Phenylalanine--tRNA ligase alpha subunit (338 aa).

Glutamate 259 is a binding site for Mg(2+).

Belongs to the class-II aminoacyl-tRNA synthetase family. Phe-tRNA synthetase alpha subunit type 1 subfamily. In terms of assembly, tetramer of two alpha and two beta subunits. It depends on Mg(2+) as a cofactor.

It is found in the cytoplasm. The catalysed reaction is tRNA(Phe) + L-phenylalanine + ATP = L-phenylalanyl-tRNA(Phe) + AMP + diphosphate + H(+). The chain is Phenylalanine--tRNA ligase alpha subunit from Herminiimonas arsenicoxydans.